Consider the following 270-residue polypeptide: Putative postmeiotic segregation increased 2-like protein 11 (270 aa).

Belongs to the DNA mismatch repair MutL/HexB family.

This Homo sapiens (Human) protein is Putative postmeiotic segregation increased 2-like protein 11 (PMS2P11).